The primary structure comprises 348 residues: Alcohol dehydrogenase 2 (348 aa).

An N-acetylserine modification is found at Ser-2. Cys-44 is a Zn(2+) binding site. Residues His-45, Thr-46, and His-49 each coordinate NAD(+). Zn(2+) is bound by residues His-67, Glu-68, Cys-98, Cys-101, Cys-104, Cys-112, and Cys-154. The NAD(+) site is built by Gly-181, Gly-182, Leu-183, Asp-202, and Lys-207. Residue Ser-213 is modified to Phosphoserine. Phe-222 is an NAD(+) binding site. Thr-223 bears the Phosphothreonine mark. Residues Lys-226 and Lys-234 each participate in a glycyl lysine isopeptide (Lys-Gly) (interchain with G-Cter in ubiquitin) cross-link. Val-269 serves as a coordination point for NAD(+). Ser-279 is subject to Phosphoserine. Lys-287 participates in a covalent cross-link: Glycyl lysine isopeptide (Lys-Gly) (interchain with G-Cter in ubiquitin). Residues Ser-294 and Val-296 each contribute to the NAD(+) site. Residue Ser-316 is modified to Phosphoserine. Lys-319 participates in a covalent cross-link: Glycyl lysine isopeptide (Lys-Gly) (interchain with G-Cter in ubiquitin). An NAD(+)-binding site is contributed by Arg-341.

It belongs to the zinc-containing alcohol dehydrogenase family. Homotetramer. Zn(2+) is required as a cofactor.

Its subcellular location is the cytoplasm. It carries out the reaction a primary alcohol + NAD(+) = an aldehyde + NADH + H(+). The enzyme catalyses a secondary alcohol + NAD(+) = a ketone + NADH + H(+). The catalysed reaction is ethanol + NAD(+) = acetaldehyde + NADH + H(+). It catalyses the reaction butan-1-ol + NAD(+) = butanal + NADH + H(+). It carries out the reaction hexan-1-ol + NAD(+) = hexanal + NADH + H(+). Functionally, preferentially oxidative, glucose-repressed isozyme that catalyzes the conversion of ethanol to acetaldehyde. Main enzyme involved in ethanol consumption. Acts on a variety of primary unbranched aliphatic alcohols. Also produces ethanol from glucose, albeit less than ADH1. The polypeptide is Alcohol dehydrogenase 2 (ADH2) (Saccharomyces cerevisiae (strain ATCC 204508 / S288c) (Baker's yeast)).